The following is a 356-amino-acid chain: Phosphate acyltransferase (356 aa).

Belongs to the PlsX family. As to quaternary structure, homodimer. Probably interacts with PlsY.

The protein resides in the cytoplasm. It carries out the reaction a fatty acyl-[ACP] + phosphate = an acyl phosphate + holo-[ACP]. The protein operates within lipid metabolism; phospholipid metabolism. Functionally, catalyzes the reversible formation of acyl-phosphate (acyl-PO(4)) from acyl-[acyl-carrier-protein] (acyl-ACP). This enzyme utilizes acyl-ACP as fatty acyl donor, but not acyl-CoA. This Escherichia coli (strain 55989 / EAEC) protein is Phosphate acyltransferase.